The primary structure comprises 406 residues: Tyrosine--tRNA ligase (406 aa).

Tyrosine 35 is a binding site for L-tyrosine. A 'HIGH' region motif is present at residues 40-49 (PTADSLHIGH). L-tyrosine contacts are provided by tyrosine 168 and glutamine 172. The 'KMSKS' region signature appears at 228-232 (KMGKT). Residue lysine 231 coordinates ATP. Residues 340–406 (CSVVELLVDI…KKNYNRIIIK (67 aa)) enclose the S4 RNA-binding domain.

The protein belongs to the class-I aminoacyl-tRNA synthetase family. TyrS type 1 subfamily. Homodimer.

It is found in the cytoplasm. It carries out the reaction tRNA(Tyr) + L-tyrosine + ATP = L-tyrosyl-tRNA(Tyr) + AMP + diphosphate + H(+). Catalyzes the attachment of tyrosine to tRNA(Tyr) in a two-step reaction: tyrosine is first activated by ATP to form Tyr-AMP and then transferred to the acceptor end of tRNA(Tyr). This Clostridium kluyveri (strain NBRC 12016) protein is Tyrosine--tRNA ligase.